The chain runs to 158 residues: Transcription elongation factor GreA (158 aa).

Positions E53–Q73 form a coiled coil.

The protein belongs to the GreA/GreB family.

Functionally, necessary for efficient RNA polymerase transcription elongation past template-encoded arresting sites. The arresting sites in DNA have the property of trapping a certain fraction of elongating RNA polymerases that pass through, resulting in locked ternary complexes. Cleavage of the nascent transcript by cleavage factors such as GreA or GreB allows the resumption of elongation from the new 3'terminus. GreA releases sequences of 2 to 3 nucleotides. The chain is Transcription elongation factor GreA from Alkalilimnicola ehrlichii (strain ATCC BAA-1101 / DSM 17681 / MLHE-1).